The chain runs to 309 residues: Interferon-inducible double-stranded RNA-dependent protein kinase activator A homolog A (309 aa).

The disordered stretch occupies residues M1–A22. 3 consecutive DRBM domains span residues T31–G98, N123–T191, and D236–I304.

This sequence belongs to the PRKRA family. In terms of assembly, homodimer. Interacts with dicer1 and eif2ak2/pkr. Also able to interact with dsRNA.

It localises to the cytoplasm. It is found in the perinuclear region. Its subcellular location is the nucleus. Its function is as follows. Activates eif2ak2/pkr in the absence of double-stranded RNA (dsRNA), leading to phosphorylation of eif2s1/efi2-alpha and inhibition of translation and induction of apoptosis. Required for siRNA production by dicer1 and for subsequent siRNA-mediated post-transcriptional gene silencing. Does not seem to be required for processing of pre-miRNA to miRNA by dicer1. This Xenopus laevis (African clawed frog) protein is Interferon-inducible double-stranded RNA-dependent protein kinase activator A homolog A (prkra-a).